The primary structure comprises 99 residues: Large ribosomal subunit protein uL23 (99 aa).

The protein belongs to the universal ribosomal protein uL23 family. As to quaternary structure, part of the 50S ribosomal subunit. Contacts protein L29, and trigger factor when it is bound to the ribosome.

In terms of biological role, one of the early assembly proteins it binds 23S rRNA. One of the proteins that surrounds the polypeptide exit tunnel on the outside of the ribosome. Forms the main docking site for trigger factor binding to the ribosome. This Shewanella loihica (strain ATCC BAA-1088 / PV-4) protein is Large ribosomal subunit protein uL23.